Reading from the N-terminus, the 197-residue chain is Sec-independent protein translocase protein TatB (197 aa).

A helical transmembrane segment spans residues 1 to 21 (MFDIGFGELLLVMVLGLIVLG). The tract at residues 93 to 197 (KRGYTETPSP…ASARQPSDSR (105 aa)) is disordered. Basic and acidic residues-rich tracts occupy residues 104-113 (KSDDPKKSGD) and 160-169 (NHNDGRHATS). Low complexity predominate over residues 180–197 (PEQSQPSAASARQPSDSR).

This sequence belongs to the TatB family. The Tat system comprises two distinct complexes: a TatABC complex, containing multiple copies of TatA, TatB and TatC subunits, and a separate TatA complex, containing only TatA subunits. Substrates initially bind to the TatABC complex, which probably triggers association of the separate TatA complex to form the active translocon.

The protein resides in the cell inner membrane. Its function is as follows. Part of the twin-arginine translocation (Tat) system that transports large folded proteins containing a characteristic twin-arginine motif in their signal peptide across membranes. Together with TatC, TatB is part of a receptor directly interacting with Tat signal peptides. TatB may form an oligomeric binding site that transiently accommodates folded Tat precursor proteins before their translocation. The polypeptide is Sec-independent protein translocase protein TatB (Pectobacterium atrosepticum (strain SCRI 1043 / ATCC BAA-672) (Erwinia carotovora subsp. atroseptica)).